Reading from the N-terminus, the 1400-residue chain is DNA-directed RNA polymerase subunit beta' (1400 aa).

Cys-70, Cys-72, Cys-85, and Cys-88 together coordinate Zn(2+). Residues Asp-460, Asp-462, and Asp-464 each coordinate Mg(2+). Zn(2+)-binding residues include Cys-814, Cys-888, Cys-895, and Cys-898.

The protein belongs to the RNA polymerase beta' chain family. As to quaternary structure, the RNAP catalytic core consists of 2 alpha, 1 beta, 1 beta' and 1 omega subunit. When a sigma factor is associated with the core the holoenzyme is formed, which can initiate transcription. Mg(2+) is required as a cofactor. It depends on Zn(2+) as a cofactor.

It carries out the reaction RNA(n) + a ribonucleoside 5'-triphosphate = RNA(n+1) + diphosphate. In terms of biological role, DNA-dependent RNA polymerase catalyzes the transcription of DNA into RNA using the four ribonucleoside triphosphates as substrates. The chain is DNA-directed RNA polymerase subunit beta' from Vibrio vulnificus (strain CMCP6).